The sequence spans 71 residues: Cold shock-like protein CspB (71 aa).

Residues 7-67 enclose the CSD domain; the sequence is GLVKWFNADK…GAKGPAAANV (61 aa).

Its subcellular location is the cytoplasm. The polypeptide is Cold shock-like protein CspB (cspB) (Escherichia coli (strain K12)).